A 504-amino-acid chain; its full sequence is Terminase, large subunit (504 aa).

Residues 1–204 are ATPase activity; sequence MTRGERVIAF…LSIWIDDAVK (204 aa). The short motif at 54-61 is the Walker A motif element; sequence IARKNGKT. A Walker B motif motif is present at residues 149 to 154; the sequence is LAILDE. The interval 326 to 415 is nuclease activity; sequence FPFFWTPQKT…LPLVEFGQGF (90 aa). Aspartate 471 lines the Mg(2+) pocket.

The protein belongs to the Hendrixvirinae large terminase family. Homopentamer; forms a ring-like structure through which genomic DNA is translocated into the capsid. Interacts with the terminase small subunit; the active complex is composed of a pentamer ring of terminase large subunits and a nonamer ring of terminase small subunits. Interacts with the portal protein; this interaction allows the packaging of viral DNA. Requires Mg(2+) as cofactor. Mn(2+) is required as a cofactor.

Inhibited by zinc. The terminase large subunit acts as an ATP driven molecular motor necessary for viral DNA translocation into empty capsids and as an endonuclease that cuts the viral genome from the concetamer to initiate and to end a packaging reaction. The terminase lies at a unique vertex of the procapsid and is composed of two subunits, a small terminase subunit involved in viral DNA recognition (packaging sequence), and a large terminase subunit possessing endonucleolytic and ATPase activities. Both terminase subunits heterooligomerize and are docked on the portal protein to form the packaging machine. Packaging initiates by TerS recognizing the packaging sequence in the viral DNA. The nuclease activity of TerL cuts the viral DNA and the terminase-DNA complex binds to the portal of a procapsid shell. DNA is translocated into the capsid, powered by the packaging ATPase in TerL, which continues until the next site is encountered at which point the motor stops and again cuts the DNA to release the nucleocapsid filled with a unit-length genome ('unit length' packaging). This chain is Terminase, large subunit (2), found in Escherichia coli (Bacteriophage HK97).